We begin with the raw amino-acid sequence, 259 residues long: Ribosomal RNA small subunit methyltransferase J (259 aa).

Residues 107-108, 123-124, 159-160, and Asp-177 each bind S-adenosyl-L-methionine; these read RD, ER, and SS.

It belongs to the methyltransferase superfamily. RsmJ family.

The protein resides in the cytoplasm. It catalyses the reaction guanosine(1516) in 16S rRNA + S-adenosyl-L-methionine = N(2)-methylguanosine(1516) in 16S rRNA + S-adenosyl-L-homocysteine + H(+). Specifically methylates the guanosine in position 1516 of 16S rRNA. The protein is Ribosomal RNA small subunit methyltransferase J of Shewanella loihica (strain ATCC BAA-1088 / PV-4).